A 379-amino-acid polypeptide reads, in one-letter code: UDP-4-amino-4-deoxy-L-arabinose--oxoglutarate aminotransferase (379 aa).

Residue Lys182 is modified to N6-(pyridoxal phosphate)lysine.

The protein belongs to the DegT/DnrJ/EryC1 family. ArnB subfamily. Homodimer. Requires pyridoxal 5'-phosphate as cofactor.

It carries out the reaction UDP-4-amino-4-deoxy-beta-L-arabinose + 2-oxoglutarate = UDP-beta-L-threo-pentopyranos-4-ulose + L-glutamate. Its pathway is nucleotide-sugar biosynthesis; UDP-4-deoxy-4-formamido-beta-L-arabinose biosynthesis; UDP-4-deoxy-4-formamido-beta-L-arabinose from UDP-alpha-D-glucuronate: step 2/3. It participates in bacterial outer membrane biogenesis; lipopolysaccharide biosynthesis. Functionally, catalyzes the conversion of UDP-4-keto-arabinose (UDP-Ara4O) to UDP-4-amino-4-deoxy-L-arabinose (UDP-L-Ara4N). The modified arabinose is attached to lipid A and is required for resistance to polymyxin and cationic antimicrobial peptides. The polypeptide is UDP-4-amino-4-deoxy-L-arabinose--oxoglutarate aminotransferase (Shigella boydii serotype 4 (strain Sb227)).